The following is a 283-amino-acid chain: Shikimate dehydrogenase (NADP(+)) (283 aa).

Shikimate contacts are provided by residues Ser16 to Ser18 and Thr63. Catalysis depends on Lys67, which acts as the Proton acceptor. An NADP(+)-binding site is contributed by Asp79. Shikimate-binding residues include Asn88 and Asp103. NADP(+) is bound by residues Gly128–Ala132, Ala223, and Gly243.

Belongs to the shikimate dehydrogenase family. As to quaternary structure, homodimer.

The catalysed reaction is shikimate + NADP(+) = 3-dehydroshikimate + NADPH + H(+). It participates in metabolic intermediate biosynthesis; chorismate biosynthesis; chorismate from D-erythrose 4-phosphate and phosphoenolpyruvate: step 4/7. Functionally, involved in the biosynthesis of the chorismate, which leads to the biosynthesis of aromatic amino acids. Catalyzes the reversible NADPH linked reduction of 3-dehydroshikimate (DHSA) to yield shikimate (SA). The polypeptide is Shikimate dehydrogenase (NADP(+)) (Xanthomonas oryzae pv. oryzae (strain MAFF 311018)).